The following is a 262-amino-acid chain: Small ribosomal subunit protein eS1 (262 aa).

Basic and acidic residues predominate over residues Asp234 to Glu251. Residues Asp234–His262 are disordered.

The protein belongs to the eukaryotic ribosomal protein eS1 family. As to quaternary structure, component of the small ribosomal subunit. Mature ribosomes consist of a small (40S) and a large (60S) subunit. The 40S subunit contains about 33 different proteins and 1 molecule of RNA (18S). The 60S subunit contains about 49 different proteins and 3 molecules of RNA (25S, 5.8S and 5S).

The protein resides in the cytoplasm. This chain is Small ribosomal subunit protein eS1, found in Plasmodium yoelii yoelii.